We begin with the raw amino-acid sequence, 380 residues long: MAKRDYYEILGVAKSADEREIKKAYKRLAMKFHPDRNQGDKESEGKFKEIKEAYEILTDGQKRAAYDQYGHAAFEQGGMGGGGHGGFGGGGADFSDIFGDVFGDIFGGGRRQQRAARGADLRYNMELTLEEAVRGVSKEIRIPTLEECGVCHGSGAKAGTKPQTCSTCHGAGQVQMRQGFFTVQQACPTCHGRGSVIKDPCNACHGHGRVEKSKTLSVKIPAGVDTGDRIRLSGEGEAGEQGAPAGDLYVQVQVRKHHIFEREENNLYCEVPINFVMAALGGEIEVPTLDGRVNLKVPAETQTGKLFRMRGKGVKSVRGGAQGDLLCRVVVETPVSLNEKQKTLLRELDESFGGPSGEKNSPRSKTFFDGVKKFFDDLTR.

A J domain is found at 5–70 (DYYEILGVAK…QKRAAYDQYG (66 aa)). The segment at 135–213 (GVSKEIRIPT…CHGHGRVEKS (79 aa)) adopts a CR-type zinc-finger fold. C148, C151, C165, C168, C187, C190, C201, and C204 together coordinate Zn(2+). CXXCXGXG motif repeat units lie at residues 148–155 (CGVCHGSG), 165–172 (CSTCHGAG), 187–194 (CPTCHGRG), and 201–208 (CNACHGHG).

The protein belongs to the DnaJ family. As to quaternary structure, homodimer. It depends on Zn(2+) as a cofactor.

It localises to the cytoplasm. In terms of biological role, participates actively in the response to hyperosmotic and heat shock by preventing the aggregation of stress-denatured proteins and by disaggregating proteins, also in an autonomous, DnaK-independent fashion. Unfolded proteins bind initially to DnaJ; upon interaction with the DnaJ-bound protein, DnaK hydrolyzes its bound ATP, resulting in the formation of a stable complex. GrpE releases ADP from DnaK; ATP binding to DnaK triggers the release of the substrate protein, thus completing the reaction cycle. Several rounds of ATP-dependent interactions between DnaJ, DnaK and GrpE are required for fully efficient folding. Also involved, together with DnaK and GrpE, in the DNA replication of plasmids through activation of initiation proteins. The sequence is that of Chaperone protein DnaJ from Erwinia tasmaniensis (strain DSM 17950 / CFBP 7177 / CIP 109463 / NCPPB 4357 / Et1/99).